The sequence spans 247 residues: Small ribosomal subunit protein uS2 (247 aa).

Belongs to the universal ribosomal protein uS2 family.

This is Small ribosomal subunit protein uS2 from Cupriavidus taiwanensis (strain DSM 17343 / BCRC 17206 / CCUG 44338 / CIP 107171 / LMG 19424 / R1) (Ralstonia taiwanensis (strain LMG 19424)).